A 1402-amino-acid polypeptide reads, in one-letter code: MAAAGSLERSFVELSGAERERPRHFREFTVCDIGTASAAFGTVKYSESAGGFYYVESGKLFSITRNRFIHWKTSGDTLELVEESLDLNLLNNAVRLKFQNYNILPGGVHVSETQNHVIILILTNQTVHRLILPHPSRMYRSELVTESQMQSIFTDIGKVDFRDPCNSQLIPSVPGLSPGSTTSAAWLSSDGEALFALPSASGGIFVLKLPPYDVPGIASVVELKQSSVMQRLLTGWMPTAIRGDHGPSDRALSLAVHCVEHDAFIFALCQDHKLRMWSYKDQMCLMVADMLEYVPVNKDLRLTAGTGHKLRLAYSPSMGLYLGIYMHAPKRGQFCVFQLVSTENNRYSLDHISSLFTSQETLVDFALTSTDIWALWHDAENQTIVKYINFEHNVAGQWNPVFMQPLPEEEIVIRDDQDPREMYLRSLFTPGHFINAALCKALQIFCRGTERNLDLSWNELKKEITLAVENELQGSVTEYEFSQDEFRTLQQEFWCKFYACVLQYQEALSHPLALHLNPVTNMVCLLKKGYLSFLVPSSLVDHLYLLPDEHLLTEDETTISDDADVARDVLCLIKCLRMIGESVTMDMAVLMETSCYNLQSPEKAAEHILEDLITIDVENVMEDICSKLQEIRNPVHAIGLLIREMDYETEVEMEKGFDPAQPLNVRMNLSQLYGSSTAGYIVCRGVYKIASTRFLICRDLLILQQLLTRLGDAVILGAGQLFQAQQDLLHRTAPLLLSYYLIKWASQCLATDVPVDTLESNLQHLSVLELTDSGALMANKLVSSPQTIMELFFQEVARKQIISHLFSQPKAPLSQTGLNWPEMITAVTGYLLQLLWPSNPGCLFLECLMGNCQYVQLQDYIQLLHPWCQVNVGSCRFMLGRCYLVTGEVQKALECFCQAASEVGKEEFLDRLIRSEDGEIVSTPKLQYYDKVLRLLDVVGLPELVIQLATSAITEAGDDWKSQATLRTCIFKHHLDLGHNSQAYEALTQIPDSSRQLDCLRQLVVVLCERSQLQDLVEFPYVNLHNEVVGIIESRARAVDLMTHNYYELLYAFHIYRHNYRKAGTVMFEYGMRLGREVRTLRGLEKQGNCYLAAINCLRLIRPEYAWIVQPASGAVSDRPGASPKRNHDGECTAAPTNRQIEILELEDLEKEYSLARIRLTLARHDPSVIAIAGSSSAKEMSALLVQAGLFDTAISLCQTFTLPLTPVFEGLAFKCIKLQFGGEAAQGEAWSWLATNQLSSVITTKESSATDEAWRLLSTYLERYKVQNNLYHHCVINKLLSHGVPLPNWLINSYKKVDAAELLRLYLNYDLLEEAVDLVSEYVDAVLGKGHQYFGIEFPLSATAPMVWLPYSSIDQLLQALGENSANSHNIILSQKILDKLEDYQQKVDKATRDLLYRRDL.

Residues Ser-10, Ser-456, Ser-915, and Ser-1123 each carry the phosphoserine modification.

In terms of assembly, part of the nuclear pore complex (NPC). Forms part of the NUP160 subcomplex in the nuclear pore which is composed of NUP160, NUP133, NUP107 and NUP96. This complex plays a role in RNA export and in tethering NUP98 and NUP153 to the nucleus.

It is found in the nucleus. The protein localises to the nuclear pore complex. Its function is as follows. Functions as a component of the nuclear pore complex (NPC). Involved in poly(A)+ RNA transport. This is Nuclear pore complex protein Nup160 (Nup160) from Mus musculus (Mouse).